Consider the following 603-residue polypeptide: Probable GMP synthase [glutamine-hydrolyzing] (603 aa).

The 190-residue stretch at 6–195 (KIAVVDFGGQ…FIQICGVSKT (190 aa)) folds into the Glutamine amidotransferase type-1 domain. Cys81 (nucleophile) is an active-site residue. Catalysis depends on residues His170 and Glu172. Residues 196-392 (WGIDQFLKEK…LGLESEWVGR (197 aa)) form the GMPS ATP-PPase domain. 224–230 (SGGVDST) provides a ligand contact to ATP.

Homodimer.

The enzyme catalyses XMP + L-glutamine + ATP + H2O = GMP + L-glutamate + AMP + diphosphate + 2 H(+). The protein operates within purine metabolism; GMP biosynthesis; GMP from XMP (L-Gln route): step 1/1. In terms of biological role, catalyzes the synthesis of GMP from XMP. In Leptospira interrogans serogroup Icterohaemorrhagiae serovar copenhageni (strain Fiocruz L1-130), this protein is Probable GMP synthase [glutamine-hydrolyzing] (guaA).